Here is a 192-residue protein sequence, read N- to C-terminus: dCTP deaminase, dUMP-forming (192 aa).

DCTP contacts are provided by residues 101-106 (KSSLGR), Asp119, 127-129 (TLE), Gln148, Tyr162, and Gln174. Glu129 serves as the catalytic Proton donor/acceptor. The interval 165–184 (GAYGNRYQGQRGPTASRSHL) is disordered. Positions 171 to 183 (YQGQRGPTASRSH) are enriched in polar residues.

The protein belongs to the dCTP deaminase family. Homotrimer.

It catalyses the reaction dCTP + 2 H2O = dUMP + NH4(+) + diphosphate. It functions in the pathway pyrimidine metabolism; dUMP biosynthesis; dUMP from dCTP: step 1/1. Its function is as follows. Bifunctional enzyme that catalyzes both the deamination of dCTP to dUTP and the hydrolysis of dUTP to dUMP without releasing the toxic dUTP intermediate. The chain is dCTP deaminase, dUMP-forming from Kocuria rhizophila (strain ATCC 9341 / DSM 348 / NBRC 103217 / DC2201).